Reading from the N-terminus, the 31-residue chain is Cytochrome b6-f complex subunit 6 (31 aa).

Residues 4–26 (LTSYFGFLLAALTITSALFIGLN) form a helical membrane-spanning segment.

The protein belongs to the PetL family. The 4 large subunits of the cytochrome b6-f complex are cytochrome b6, subunit IV (17 kDa polypeptide, PetD), cytochrome f and the Rieske protein, while the 4 small subunits are PetG, PetL, PetM and PetN. The complex functions as a dimer.

Its subcellular location is the plastid. It is found in the chloroplast thylakoid membrane. Functionally, component of the cytochrome b6-f complex, which mediates electron transfer between photosystem II (PSII) and photosystem I (PSI), cyclic electron flow around PSI, and state transitions. PetL is important for photoautotrophic growth as well as for electron transfer efficiency and stability of the cytochrome b6-f complex. The sequence is that of Cytochrome b6-f complex subunit 6 from Amaranthus caudatus (Love-lies-bleeding).